The chain runs to 445 residues: Probable fructoselysine/psicoselysine transporter FrlA (445 aa).

11 consecutive transmembrane segments (helical) span residues 10-32, 39-61, 97-119, 126-143, 153-175, 188-210, 230-252, 272-294, 341-363, 384-406, and 411-433; these read LGFW…FVSV, AGTP…PQMC, FWAN…LGFL, LGKF…LLHL, QTLI…IFWF, IGAT…SYTG, RALI…VISG, WIPA…VILG, GIFF…VMCF, LWRT…ILVA, and WAPI…AYAF.

The protein belongs to the amino acid-polyamine-organocation (APC) superfamily.

It is found in the cell inner membrane. It catalyses the reaction N(6)-(D-fructosyl)-L-lysine(in) = N(6)-(D-fructosyl)-L-lysine(out). It carries out the reaction N(6)-(D-psicosyl)-L-lysine(in) = N(6)-(D-psicosyl)-L-lysine(out). The protein operates within carbohydrate metabolism; fructoselysine degradation. In terms of biological role, is likely involved in the transport of fructoselysine and psicoselysine to the cytoplasm, where they are degraded. The protein is Probable fructoselysine/psicoselysine transporter FrlA (frlA) of Escherichia coli O157:H7.